The sequence spans 89 residues: Small ribosomal subunit protein uS17 (89 aa).

The protein belongs to the universal ribosomal protein uS17 family. In terms of assembly, part of the 30S ribosomal subunit.

Functionally, one of the primary rRNA binding proteins, it binds specifically to the 5'-end of 16S ribosomal RNA. The polypeptide is Small ribosomal subunit protein uS17 (Chlorobium chlorochromatii (strain CaD3)).